The following is a 177-amino-acid chain: Gamma-crystallin M1-2 (177 aa).

2 consecutive Beta/gamma crystallin 'Greek key' domains span residues 2–40 (GKII…RVEN) and 41–83 (GCWM…RLLS). The interval 84–90 (QNLGIGT) is connecting peptide. 2 consecutive Beta/gamma crystallin 'Greek key' domains span residues 91–131 (NKLR…NVLD) and 132–174 (GYWI…RRVI).

Belongs to the beta/gamma-crystallin family. In terms of assembly, monomer.

Functionally, crystallins are the dominant structural components of the vertebrate eye lens. The chain is Gamma-crystallin M1-2 from Aquarana catesbeiana (American bullfrog).